Reading from the N-terminus, the 258-residue chain is Regulatory protein RecX (258 aa).

Belongs to the RecX family.

The protein localises to the cytoplasm. Its function is as follows. Modulates RecA activity. The chain is Regulatory protein RecX from Streptococcus pneumoniae (strain Hungary19A-6).